A 257-amino-acid polypeptide reads, in one-letter code: Tryptophan synthase alpha chain (257 aa).

Catalysis depends on proton acceptor residues Glu-46 and Asp-57.

Belongs to the TrpA family. In terms of assembly, tetramer of two alpha and two beta chains.

It catalyses the reaction (1S,2R)-1-C-(indol-3-yl)glycerol 3-phosphate + L-serine = D-glyceraldehyde 3-phosphate + L-tryptophan + H2O. It participates in amino-acid biosynthesis; L-tryptophan biosynthesis; L-tryptophan from chorismate: step 5/5. Its function is as follows. The alpha subunit is responsible for the aldol cleavage of indoleglycerol phosphate to indole and glyceraldehyde 3-phosphate. In Parabacteroides distasonis (strain ATCC 8503 / DSM 20701 / CIP 104284 / JCM 5825 / NCTC 11152), this protein is Tryptophan synthase alpha chain.